The chain runs to 111 residues: Nascent polypeptide-associated complex protein (111 aa).

Positions 3–72 constitute an NAC-A/B domain; sequence GMNPRQMKKL…EEVREVLEIS (70 aa).

The protein belongs to the NAC-alpha family. Homodimer. Interacts with the ribosome. Binds ribosomal RNA.

Functionally, contacts the emerging nascent chain on the ribosome. The protein is Nascent polypeptide-associated complex protein of Thermococcus kodakarensis (strain ATCC BAA-918 / JCM 12380 / KOD1) (Pyrococcus kodakaraensis (strain KOD1)).